The sequence spans 451 residues: Glucose-6-phosphate isomerase (451 aa).

The active-site Proton donor is the glutamate 291. Catalysis depends on residues histidine 312 and lysine 426.

Belongs to the GPI family.

Its subcellular location is the cytoplasm. It carries out the reaction alpha-D-glucose 6-phosphate = beta-D-fructose 6-phosphate. It functions in the pathway carbohydrate biosynthesis; gluconeogenesis. It participates in carbohydrate degradation; glycolysis; D-glyceraldehyde 3-phosphate and glycerone phosphate from D-glucose: step 2/4. In terms of biological role, catalyzes the reversible isomerization of glucose-6-phosphate to fructose-6-phosphate. The sequence is that of Glucose-6-phosphate isomerase from Caldanaerobacter subterraneus subsp. tengcongensis (strain DSM 15242 / JCM 11007 / NBRC 100824 / MB4) (Thermoanaerobacter tengcongensis).